Consider the following 689-residue polypeptide: Zinc finger protein 185 (689 aa).

2 disordered regions span residues 1–253 (MSIS…GRTK) and 298–534 (APDV…SCTS). Residues 35-52 (LKGDKSWITKQDESEGRT) show a composition bias toward basic and acidic residues. At serine 66 the chain carries Phosphoserine. The segment covering 95–114 (IDSSSQPQQQFPKANGTPKS) has biased composition (polar residues). Position 153 is a phosphoserine (serine 153). The segment covering 157–166 (DTEEEEEEEV) has biased composition (acidic residues). Position 206 is a phosphoserine (proline 206). 2 stretches are compositionally biased toward basic and acidic residues: residues 217–232 (KRVE…EKSQ) and 310–331 (NKDK…EEAF). The segment covering 338–349 (AARSSAQLSDGN) has biased composition (polar residues). 2 stretches are compositionally biased toward low complexity: residues 373-382 (SSSATSVSAV) and 434-444 (DPAVPAQQPAD). Threonine 447 is subject to Phosphothreonine. Residues 448 to 458 (PERQSSPSGSE) are compositionally biased toward polar residues. Phosphoserine occurs at positions 453 and 465. Over residues 504-524 (PTQQPADPSTPEQQNSPSGSE) the composition is skewed to polar residues. In terms of domain architecture, LIM zinc-binding spans 627–689 (GICTYCNREI…HCGKCYEKLF (63 aa)).

As to expression, expressed in placenta, pancreas and kidney. Also expressed in prostate, testis, ovary and blood.

The protein resides in the cytoplasm. It is found in the cytoskeleton. The protein localises to the cell junction. It localises to the focal adhesion. Functionally, may be involved in the regulation of cellular proliferation and/or differentiation. This chain is Zinc finger protein 185 (ZNF185), found in Homo sapiens (Human).